Consider the following 886-residue polypeptide: Conserved oligomeric Golgi complex subunit 1 (886 aa).

Residues 834–846 show a composition bias toward basic and acidic residues; the sequence is SAERKSPIQEPVE. Positions 834–886 are disordered; that stretch reads SAERKSPIQEPVEKTATTTPTRKSGGNGARKGDSSKSKSSAASFFGMSQEWFR. The residue at position 839 (S839) is a Phosphoserine. The span at 848–857 shows a compositional bias: polar residues; sequence TATTTPTRKS.

It belongs to the COG1 family. In terms of assembly, component of the conserved oligomeric Golgi complex which is composed of eight different subunits and is required for normal Golgi morphology and localization.

Its subcellular location is the golgi apparatus membrane. Functionally, required for normal Golgi function. This Drosophila melanogaster (Fruit fly) protein is Conserved oligomeric Golgi complex subunit 1.